The chain runs to 123 residues: Small ribosomal subunit protein uS12 (123 aa).

A disordered region spans residues 1–31; it reads MPTINQLIRKPREAQKARDKAPALQASPQKR. Over residues 10 to 21 the composition is skewed to basic and acidic residues; it reads KPREAQKARDKA. Position 89 is a 3-methylthioaspartic acid (Asp-89).

The protein belongs to the universal ribosomal protein uS12 family. Part of the 30S ribosomal subunit. Contacts proteins S8 and S17. May interact with IF1 in the 30S initiation complex.

Its function is as follows. With S4 and S5 plays an important role in translational accuracy. In terms of biological role, interacts with and stabilizes bases of the 16S rRNA that are involved in tRNA selection in the A site and with the mRNA backbone. Located at the interface of the 30S and 50S subunits, it traverses the body of the 30S subunit contacting proteins on the other side and probably holding the rRNA structure together. The combined cluster of proteins S8, S12 and S17 appears to hold together the shoulder and platform of the 30S subunit. This chain is Small ribosomal subunit protein uS12, found in Xanthobacter autotrophicus (strain ATCC BAA-1158 / Py2).